Consider the following 77-residue polypeptide: Structural DNA-binding protein p10 (77 aa).

Polar residues predominate over residues 1–12 (MPTKAGTKSTAN). Residues 1–38 (MPTKAGTKSTANKKTTKGPSKSGSAKGHTGKTHATALH) are disordered. Over residues 17 to 27 (KGPSKSGSAKG) the composition is skewed to low complexity.

The protein belongs to the asfivirus P10 family.

The protein localises to the virion. Functionally, may play a role in genome packaging through direct interaction with viral DNA. Binds to ssDNA and dsDNA with the same apparent affinity in vitro. The sequence is that of Structural DNA-binding protein p10 from Ornithodoros (relapsing fever ticks).